Reading from the N-terminus, the 348-residue chain is Outer membrane protein assembly factor BamC (348 aa).

The first 19 residues, Met1–Ala19, serve as a signal peptide directing secretion. Cys20 carries N-palmitoyl cysteine lipidation. Cys20 carries S-diacylglycerol cysteine lipidation.

This sequence belongs to the BamC family. As to quaternary structure, part of the Bam complex.

The protein resides in the cell outer membrane. In terms of biological role, part of the outer membrane protein assembly complex, which is involved in assembly and insertion of beta-barrel proteins into the outer membrane. This is Outer membrane protein assembly factor BamC from Vibrio atlanticus (strain LGP32) (Vibrio splendidus (strain Mel32)).